The primary structure comprises 274 residues: 4-diphosphocytidyl-2-C-methyl-D-erythritol kinase (274 aa).

The active site involves lysine 8. 94–104 contributes to the ATP binding site; that stretch reads PSGAGLGGGSA. Aspartate 136 is a catalytic residue.

It belongs to the GHMP kinase family. IspE subfamily.

It carries out the reaction 4-CDP-2-C-methyl-D-erythritol + ATP = 4-CDP-2-C-methyl-D-erythritol 2-phosphate + ADP + H(+). The protein operates within isoprenoid biosynthesis; isopentenyl diphosphate biosynthesis via DXP pathway; isopentenyl diphosphate from 1-deoxy-D-xylulose 5-phosphate: step 3/6. Functionally, catalyzes the phosphorylation of the position 2 hydroxy group of 4-diphosphocytidyl-2C-methyl-D-erythritol. In Bacteroides fragilis (strain YCH46), this protein is 4-diphosphocytidyl-2-C-methyl-D-erythritol kinase.